A 166-amino-acid chain; its full sequence is Crossover junction endodeoxyribonuclease RuvC (166 aa).

Residues Asp11, Glu70, and Asp142 contribute to the active site. Asp11, Glu70, and Asp142 together coordinate Mg(2+).

This sequence belongs to the RuvC family. In terms of assembly, homodimer which binds Holliday junction (HJ) DNA. The HJ becomes 2-fold symmetrical on binding to RuvC with unstacked arms; it has a different conformation from HJ DNA in complex with RuvA. In the full resolvosome a probable DNA-RuvA(4)-RuvB(12)-RuvC(2) complex forms which resolves the HJ. Mg(2+) is required as a cofactor.

It is found in the cytoplasm. The enzyme catalyses Endonucleolytic cleavage at a junction such as a reciprocal single-stranded crossover between two homologous DNA duplexes (Holliday junction).. Functionally, the RuvA-RuvB-RuvC complex processes Holliday junction (HJ) DNA during genetic recombination and DNA repair. Endonuclease that resolves HJ intermediates. Cleaves cruciform DNA by making single-stranded nicks across the HJ at symmetrical positions within the homologous arms, yielding a 5'-phosphate and a 3'-hydroxyl group; requires a central core of homology in the junction. The consensus cleavage sequence is 5'-(A/T)TT(C/G)-3'. Cleavage occurs on the 3'-side of the TT dinucleotide at the point of strand exchange. HJ branch migration catalyzed by RuvA-RuvB allows RuvC to scan DNA until it finds its consensus sequence, where it cleaves and resolves the cruciform DNA. This Nitratidesulfovibrio vulgaris (strain DP4) (Desulfovibrio vulgaris) protein is Crossover junction endodeoxyribonuclease RuvC.